Here is a 365-residue protein sequence, read N- to C-terminus: Probable dual-specificity RNA methyltransferase RlmN (365 aa).

The active-site Proton acceptor is Glu108. A Radical SAM core domain is found at 114–352 (YPDRNTVCIS…SCTVRDTRGR (239 aa)). A disulfide bridge links Cys121 with Cys358. Cys128, Cys132, and Cys135 together coordinate [4Fe-4S] cluster. Residues 179–180 (GE), Ser213, 236–238 (SLH), and Asn315 each bind S-adenosyl-L-methionine. Cys358 functions as the S-methylcysteine intermediate in the catalytic mechanism.

It belongs to the radical SAM superfamily. RlmN family. [4Fe-4S] cluster is required as a cofactor.

It is found in the cytoplasm. It carries out the reaction adenosine(2503) in 23S rRNA + 2 reduced [2Fe-2S]-[ferredoxin] + 2 S-adenosyl-L-methionine = 2-methyladenosine(2503) in 23S rRNA + 5'-deoxyadenosine + L-methionine + 2 oxidized [2Fe-2S]-[ferredoxin] + S-adenosyl-L-homocysteine. It catalyses the reaction adenosine(37) in tRNA + 2 reduced [2Fe-2S]-[ferredoxin] + 2 S-adenosyl-L-methionine = 2-methyladenosine(37) in tRNA + 5'-deoxyadenosine + L-methionine + 2 oxidized [2Fe-2S]-[ferredoxin] + S-adenosyl-L-homocysteine. Its function is as follows. Specifically methylates position 2 of adenine 2503 in 23S rRNA and position 2 of adenine 37 in tRNAs. The polypeptide is Probable dual-specificity RNA methyltransferase RlmN (Mycolicibacterium gilvum (strain PYR-GCK) (Mycobacterium gilvum (strain PYR-GCK))).